We begin with the raw amino-acid sequence, 478 residues long: Divinyl ether synthase CYP74D1 (478 aa).

A heme-binding site is contributed by cysteine 431.

The protein belongs to the cytochrome P450 family. 9-divinyl ether synthase subfamily. In terms of tissue distribution, expressed in roots. Detected in stems, but not in flower buds, petioles, cotyledons or leaves.

It carries out the reaction (9S)-hydroperoxy-(10E,12Z)-octadecadienoate = colneleate + H2O. It catalyses the reaction (9S)-hydroperoxy-(10E,12Z,15Z)-octadecatrienoate = colnelenate + H2O. In terms of biological role, involved in the biosynthesis of the anti-fungal toxins colneleate and colnelenate. Can use (9S)-hydroperoxy-(10E,12Z)-octadecadienoate (9-HPOD) and (9S)-hydroperoxy-(10E,12Z,15Z)-octadecatrienoate (9-HPOT) as substrates, but has a very low activity with the corresponding 13-hydroperoxides (13-HPOD and 13-POT). The chain is Divinyl ether synthase CYP74D1 from Solanum lycopersicum (Tomato).